A 527-amino-acid polypeptide reads, in one-letter code: MEKLLVISLLLLISTSVTTSQSVTDPIAFLRCLDRQPTDPTSPNSAVAYIPTNSSFTTVLRSRIPNLRFDKPTTPKPISVVAAATWTHIQAAVGCARELSLQVRIRSGGHDFEGLSYTSTVPFFVLDMFGFKTVDVNLTERTAWVDSGATLGELYYRISEKSNVLGFPAGLSTTLGVGGHFSGGGYGNLMRKYGLSVDNVFGSGIVDSNGNIFTDRVSMGEDRFWAIRGGGAASYGVVLGYKIQLVPVPEKVTVFKVGKTVGEGAVDLIMKWQSFAHSTDRNLFVRLTLTLVNGTKPGENTVLATFIGMYLGRSDKLLTVMNRDFPELKLKKTDCTEMRWIDSVLFWDDYPVGTPTSVLLNPLVAKKLFMKRKSDYVKRLISRTDLGLILKKLVEVEKVKMNWNPYGGRMGEIPSSRTPFPHRAGNLFNIEYIIDWSEAGDNVEKKYLALANEFYRFMTPYVSSNPREAFLNYRDLDIGSSVKSTYQEGKIYGAKYFKENFERLVDIKTTIDAENFWKNEQSIPVRR.

The signal sequence occupies residues 1–20 (MEKLLVISLLLLISTSVTTS). Cysteine 32 and cysteine 95 form a disulfide bridge. N-linked (GlcNAc...) asparagine glycosylation is present at asparagine 53. The FAD-binding PCMH-type domain occupies 73–248 (TTPKPISVVA…LGYKIQLVPV (176 aa)). The residue at position 110 (histidine 110) is a Pros-8alpha-FAD histidine. N-linked (GlcNAc...) asparagine glycans are attached at residues asparagine 137 and asparagine 293.

This sequence belongs to the oxygen-dependent FAD-linked oxidoreductase family. It depends on FAD as a cofactor.

Its subcellular location is the secreted. The protein localises to the cell wall. This Arabidopsis thaliana (Mouse-ear cress) protein is Berberine bridge enzyme-like 10.